A 39-amino-acid chain; its full sequence is uncharacterized protein (39 aa).

The chain crosses the membrane as a helical span at residues 18–38 (AIKVIALVVLITISAVVYLSV).

It is found in the membrane. This is an uncharacterized protein from Enterobacteriaceae (Bacteriophage Mu).